A 372-amino-acid polypeptide reads, in one-letter code: Gustatory and pheromone receptor 39a, isoform B (372 aa).

Topologically, residues 1 to 32 are cytoplasmic; it reads MGTRNRKLLFFLHYQRYLGLTNLDFSKSLHIY. The helical transmembrane segment at 33-53 threads the bilayer; the sequence is WLHGTWSSTAIQIVVVGVFMA. Residues 54–59 lie on the Extracellular side of the membrane; it reads ALLGAL. A helical membrane pass occupies residues 60–80; that stretch reads AESLYYMETKSQTGNTFDNAV. The Cytoplasmic portion of the chain corresponds to 81-122; sequence ILTTSVTQLLANLWLRSQQKSQVNLLQRLSQVVELLQFEPYA. Residues 123–143 form a helical membrane-spanning segment; it reads VPQFRWLYRIWLLVCLIYGAM. Over 144 to 147 the chain is Extracellular; that stretch reads VTHF. A helical membrane pass occupies residues 148 to 168; it reads GINWLTTMQISRVLTLIGFVY. At 169–224 the chain is on the cytoplasmic side; sequence RCVLANFQFTCYTGMVVILKKLLQVQVKQLEHLVSTTTISMAGVAGCLRTHDEILL. The helical transmembrane segment at 225–245 threads the bilayer; sequence LGQRELIAVYGGVILFLFIYQ. At 246 to 265 the chain is on the extracellular side; sequence VMQCILIFYISNLEGFHSSN. Residues 266 to 286 traverse the membrane as a helical segment; the sequence is DLVLIFCWLAPMLFYLILPLV. Over 287-348 the chain is Cytoplasmic; the sequence is VNDIHNQANK…KSTLFKLFTA (62 aa). The chain crosses the membrane as a helical span at residues 349 to 368; that stretch reads IFTYMVILVQFKEMENSTKS. Position 369 (I369) is a topological domain, extracellular.

This sequence belongs to the insect chemoreceptor superfamily. Gustatory receptor (GR) family. Gr21a subfamily. In terms of tissue distribution, expressed in the adult labellar chemosensory neurons. In larvae, is expressed in neurons of the terminal external chemosensory organ, as well as in the dorsal and posterior pharyngeal sense organs.

The protein localises to the cell membrane. Gustatory receptor which mediates acceptance or avoidance behavior, depending on its substrates. Plays a role in sustaining courtship behavior in males, possibly through the reception of a stimulating arrestant pheromone. This Drosophila melanogaster (Fruit fly) protein is Gustatory and pheromone receptor 39a, isoform B (Gr39a).